We begin with the raw amino-acid sequence, 421 residues long: UDP-N-acetylglucosamine 1-carboxyvinyltransferase (421 aa).

Position 22–23 (22–23 (KN)) interacts with phosphoenolpyruvate. Arg-91 contacts UDP-N-acetyl-alpha-D-glucosamine. Catalysis depends on Cys-115, which acts as the Proton donor. Cys-115 bears the 2-(S-cysteinyl)pyruvic acid O-phosphothioketal mark. Residues 120 to 124 (RPIDL), Asp-306, and Ile-328 each bind UDP-N-acetyl-alpha-D-glucosamine.

Belongs to the EPSP synthase family. MurA subfamily.

It localises to the cytoplasm. It carries out the reaction phosphoenolpyruvate + UDP-N-acetyl-alpha-D-glucosamine = UDP-N-acetyl-3-O-(1-carboxyvinyl)-alpha-D-glucosamine + phosphate. It functions in the pathway cell wall biogenesis; peptidoglycan biosynthesis. Its function is as follows. Cell wall formation. Adds enolpyruvyl to UDP-N-acetylglucosamine. The chain is UDP-N-acetylglucosamine 1-carboxyvinyltransferase from Methylacidiphilum infernorum (isolate V4) (Methylokorus infernorum (strain V4)).